The following is a 474-amino-acid chain: Aspartate ammonia-lyase (474 aa).

L-aspartate-binding residues include T105, S144, T145, N146, and T191. The SS loop stretch occupies residues 322–331; sequence GSSIMPGKVN. S323 serves as the catalytic Proton acceptor. Residues S324 and K329 each contribute to the L-aspartate site.

The protein belongs to the class-II fumarase/aspartase family. Aspartase subfamily. In terms of assembly, homotetramer.

It carries out the reaction L-aspartate = fumarate + NH4(+). In terms of biological role, lyase involved in the degradation of canavanine, the delta-oxa-analog of arginine, allowing growth on canavanine as sole nitrogen and carbon source. Probably catalyzes the conversion of L-aspartate to fumarate and ammonia. The protein is Aspartate ammonia-lyase of Pseudomonas canavaninivorans.